We begin with the raw amino-acid sequence, 447 residues long: Protein king tubby (447 aa).

Low complexity-rich tracts occupy residues 71–92 and 157–169; these read GTGPNVTATSITTTPTSPYSDS and NNNNHTHHTNSSS. A disordered region spans residues 71–196; that stretch reads GTGPNVTATS…GGAPDTEGDV (126 aa).

Belongs to the TUB family.

Its subcellular location is the cytoplasm. The protein resides in the nucleus. The chain is Protein king tubby from Anopheles gambiae (African malaria mosquito).